Reading from the N-terminus, the 257-residue chain is Phosphonates import ATP-binding protein PhnC (257 aa).

The ABC transporter domain occupies I7–D251. G40–S47 is an ATP binding site.

This sequence belongs to the ABC transporter superfamily. Phosphonates importer (TC 3.A.1.9.1) family. In terms of assembly, the complex is composed of two ATP-binding proteins (PhnC), two transmembrane proteins (PhnE) and a solute-binding protein (PhnD).

Its subcellular location is the cell membrane. The catalysed reaction is phosphonate(out) + ATP + H2O = phosphonate(in) + ADP + phosphate + H(+). Part of the ABC transporter complex PhnCDE involved in phosphonates import. Responsible for energy coupling to the transport system. The polypeptide is Phosphonates import ATP-binding protein PhnC (Lactobacillus acidophilus (strain ATCC 700396 / NCK56 / N2 / NCFM)).